Here is a 142-residue protein sequence, read N- to C-terminus: Coiled-coil-helix-coiled-coil-helix domain-containing protein 10, mitochondrial (142 aa).

A mitochondrion-targeting transit peptide spans methionine 1–proline 16. Residues methionine 1–serine 20 show a composition bias toward low complexity. 2 disordered regions span residues methionine 1–methionine 45 and alanine 68–leucine 97. Residues alanine 21 to serine 39 are compositionally biased toward pro residues. A compositionally biased stretch (low complexity) spans proline 80–threonine 90. The region spanning methionine 99–serine 140 is the CHCH domain. 2 consecutive short sequence motifs (cx9C motif) follow at residues cysteine 102–cysteine 112 and cysteine 122–cysteine 132. Intrachain disulfides connect cysteine 102–cysteine 132 and cysteine 112–cysteine 122.

As to expression, ubiquitously expressed. Higher expression is observed in heart and liver.

Its subcellular location is the mitochondrion intermembrane space. Its function is as follows. May be involved in the maintenance of mitochondrial organization and mitochondrial cristae structure. The sequence is that of Coiled-coil-helix-coiled-coil-helix domain-containing protein 10, mitochondrial (CHCHD10) from Homo sapiens (Human).